A 114-amino-acid chain; its full sequence is Large ribosomal subunit protein bL19 (114 aa).

Belongs to the bacterial ribosomal protein bL19 family.

Its function is as follows. This protein is located at the 30S-50S ribosomal subunit interface and may play a role in the structure and function of the aminoacyl-tRNA binding site. The sequence is that of Large ribosomal subunit protein bL19 from Desulfatibacillum aliphaticivorans.